Reading from the N-terminus, the 202-residue chain is T-cell surface glycoprotein CD3 epsilon chain (202 aa).

The N-terminal stretch at 1–21 (MQSRNLWRILGLCLLSVGAWG) is a signal peptide. At 22–122 (QDEDFKASDD…VCANCIEVNL (101 aa)) the chain is on the extracellular side. The Ig-like domain maps to 37–107 (PEKRFKVSIS…ADSIKEKSYL (71 aa)). A disulfide bond links Cys54 and Cys96. A helical membrane pass occupies residues 123 to 143 (MAVVTIIVADICLTLGLLLMV). Over 144–202 (YYWSKTRKANAKPVMRGTGAGSRPRGQNKEKPPPVPNPDYEPIRKGQQDLYSGLNQRGI) the chain is Cytoplasmic. Positions 156-202 (PVMRGTGAGSRPRGQNKEKPPPVPNPDYEPIRKGQQDLYSGLNQRGI) are disordered. The interval 170-187 (QNKEKPPPVPNPDYEPIR) is NUMB-binding region. An ITAM domain is found at 173–200 (EKPPPVPNPDYEPIRKGQQDLYSGLNQR). The interval 174–181 (KPPPVPNP) is proline-rich sequence. Tyr183 and Tyr194 each carry phosphotyrosine. The span at 192 to 202 (DLYSGLNQRGI) shows a compositional bias: polar residues.

As to quaternary structure, the TCR-CD3 complex is composed of a CD3D/CD3E and a CD3G/CD3E heterodimers that preferentially associate with TCRalpha and TCRbeta, respectively, to form TCRalpha/CD3E/CD3G and TCRbeta/CD3G/CD3E trimers. In turn, the hexamer interacts with CD3Z homodimer to form the TCR-CD3 complex. Alternatively, TCRalpha and TCRbeta can be replaced by TCRgamma and TCRdelta. Interacts with CD6. Interacts (via Proline-rich sequence) with NCK1; the interaction is ligand dependent but independent of tyrosine kinase activation. In terms of processing, phosphorylated on Tyr residues after T-cell receptor triggering by LCK in association with CD4/CD8.

It is found in the cell membrane. In terms of biological role, part of the TCR-CD3 complex present on T-lymphocyte cell surface that plays an essential role in adaptive immune response. When antigen presenting cells (APCs) activate T-cell receptor (TCR), TCR-mediated signals are transmitted across the cell membrane by the CD3 chains CD3D, CD3E, CD3G and CD3Z. All CD3 chains contain immunoreceptor tyrosine-based activation motifs (ITAMs) in their cytoplasmic domain. Upon TCR engagement, these motifs become phosphorylated by Src family protein tyrosine kinases LCK and FYN, resulting in the activation of downstream signaling pathways. In addition of this role of signal transduction in T-cell activation, CD3E plays an essential role in correct T-cell development. Also participates in internalization and cell surface down-regulation of TCR-CD3 complexes via endocytosis sequences present in CD3E cytosolic region. In addition to its role as a TCR coreceptor, it serves as a receptor for ITPRIPL1. Ligand recognition inhibits T-cell activation by promoting interaction with NCK1, which prevents CD3E-ZAP70 interaction and blocks the ERK-NFkB signaling cascade and calcium influx. The chain is T-cell surface glycoprotein CD3 epsilon chain (CD3E) from Canis lupus familiaris (Dog).